The following is a 187-amino-acid chain: dITP/XTP pyrophosphatase (187 aa).

7–12 (TNNPYK) lines the substrate pocket. Mg(2+) contacts are provided by Glu36 and Asp65. Asp65 functions as the Proton acceptor in the catalytic mechanism. Substrate contacts are provided by residues Thr66, 140–143 (FGYD), Lys163, and 168–169 (HR).

It belongs to the HAM1 NTPase family. In terms of assembly, homodimer. Requires Mg(2+) as cofactor.

The catalysed reaction is XTP + H2O = XMP + diphosphate + H(+). It catalyses the reaction dITP + H2O = dIMP + diphosphate + H(+). It carries out the reaction ITP + H2O = IMP + diphosphate + H(+). Its function is as follows. Pyrophosphatase that catalyzes the hydrolysis of nucleoside triphosphates to their monophosphate derivatives, with a high preference for the non-canonical purine nucleotides XTP (xanthosine triphosphate), dITP (deoxyinosine triphosphate) and ITP. Seems to function as a house-cleaning enzyme that removes non-canonical purine nucleotides from the nucleotide pool, thus preventing their incorporation into DNA/RNA and avoiding chromosomal lesions. This chain is dITP/XTP pyrophosphatase, found in Pyrobaculum aerophilum (strain ATCC 51768 / DSM 7523 / JCM 9630 / CIP 104966 / NBRC 100827 / IM2).